We begin with the raw amino-acid sequence, 427 residues long: Zinc finger protein DPF3 (427 aa).

Residues 182-244 form a disordered region; that stretch reads LENDENADEV…NDAASQDDHD (63 aa). The span at 184 to 199 shows a compositional bias: acidic residues; sequence NDENADEVNEEEDLEE. The span at 233–244 shows a compositional bias: basic and acidic residues; it reads RRNDAASQDDHD. The C2H2-type zinc finger occupies 247 to 270; that stretch reads YVCDICGKRYKNRPGLSYHYAHTH. Residues 272–301 form a disordered region; it reads ASEEGDEAREQETRSSPVHRNENHKPQKGP. A compositionally biased stretch (basic and acidic residues) spans 279 to 296; sequence AREQETRSSPVHRNENHK. 2 consecutive PHD-type zinc fingers follow at residues 308–368 and 365–415; these read NNYC…CKSC and CKSC…CREL.

It belongs to the requiem/DPF family. Component of the BAF complex. Interacts with acetylated histones H3 and H4. Component of neuron-specific chromatin remodeling complex (nBAF complex), a subfamily of ATP-dependent SWI/SNF chromatin remodeling complexes. In terms of tissue distribution, expressed in the heart and somites.

The protein resides in the nucleus. In terms of biological role, muscle-specific component of the BAF complex, a multiprotein complex involved in transcriptional activation and repression of select genes by chromatin remodeling (alteration of DNA-nucleosome topology). Specifically binds acetylated lysines on histone 3 and 4. In the complex, it acts as a tissue-specific anchor between histone acetylations and methylations and chromatin remodeling. It thereby probably plays an essential role in heart and skeletal muscle development. Belongs to the neuron-specific chromatin remodeling complex (nBAF complex) and plays a role in neural development. The sequence is that of Zinc finger protein DPF3 (DPF3) from Gallus gallus (Chicken).